The following is a 73-amino-acid chain: Toxin Td12 (73 aa).

The N-terminal stretch at 1-7 (IGMVIEC) is a signal peptide. Positions 8–70 (KDGYLMEPNG…TWDRATNTCG (63 aa)) constitute an LCN-type CS-alpha/beta domain. Disulfide bonds link cysteine 18/cysteine 69, cysteine 22/cysteine 44, cysteine 30/cysteine 50, and cysteine 34/cysteine 52. Arginine 71 bears the Arginine amide mark.

It belongs to the long (4 C-C) scorpion toxin superfamily. Sodium channel inhibitor family. Beta subfamily. Expressed by the venom gland.

It is found in the secreted. Its function is as follows. Beta toxins bind voltage-independently at site-4 of sodium channels (Nav) and shift the voltage of activation toward more negative potentials thereby affecting sodium channel activation and promoting spontaneous and repetitive firing. The polypeptide is Toxin Td12 (Tityus discrepans (Venezuelan scorpion)).